The primary structure comprises 410 residues: MTIALSEQLTNRFFRYLAVSSQSDAASPTLPSTEGQHKMAQMLAEELRQLGLEDILIDEHATVTARKPGNQPTAPRIGFITHIDTVDVGLSPDIHPQRLRFTGSDLCLNAEQGIYLRTAEHPEILRYQGEEIIFSDGTSVLGADNKAAVTVVMTLLENLTADDCHGDIVVAFVPDEEIGLRGAKALDLARFDVDFAYTIDCCELGEVVYENFNAASAEIDIIGVTAHPMSAKNVLINPIRVAYDIISEFSPQETPEHTEGREGYVWFTDMTANPNSAKLKIAIRDFDNVSFAARKAYIGEVVAKVSAQYPRAKISYSVTDVYSNISNSIGEDKRAIDLIFSSMAELNIEPKVIPMRGGTDGAALSTQGLLTPNYFTGAHNFHSPFEFLPISSFVKSYQLTRTICLSAAKA.

Residue His-82 coordinates Zn(2+). Asp-84 is a catalytic residue. A Zn(2+)-binding site is contributed by Asp-144. The active-site Proton acceptor is the Glu-176. Positions 177, 200, and 382 each coordinate Zn(2+).

It belongs to the peptidase M20B family. It depends on Zn(2+) as a cofactor.

The protein is Peptidase T-like protein YPO1009/y3403/YP_3421 of Yersinia pestis.